The sequence spans 420 residues: Putative transporter AmpG 3 (420 aa).

12 helical membrane passes run 6–26, 41–61, 79–99, 104–124, 141–161, 166–186, 230–250, 274–294, 297–317, 324–344, 359–381, and 386–406; these read YLIGILLLGLISGLTFNLIFF, IVGSISLAAFPYCLKVIWSPF, GWALVSQIFLILTMMWFLKRS, LCITAIILFIIAFCSSTQDIV, IAFTFSSIGFRLGMLLGSVGA, IIFGWNTVYKFALFITMVGPI, LLLIILFVFLYKAADSIPMAM, LLIMIVGGTLGGILAAKIGIF, VLIGGVIQLLSPIMFMILATI, FIITITIQNFCSGFAGTIISI, YSISSSFSSLSRIILASLGGICA, and WPVFFLCNTLFSMLFIPIFYI.

It belongs to the major facilitator superfamily.

The protein resides in the cell inner membrane. This is Putative transporter AmpG 3 (ampG3) from Rickettsia typhi (strain ATCC VR-144 / Wilmington).